We begin with the raw amino-acid sequence, 1157 residues long: DNA-directed RNA polymerase subunit beta (1157 aa).

It belongs to the RNA polymerase beta chain family. The RNAP catalytic core consists of 2 alpha, 1 beta, 1 beta' and 1 omega subunit. When a sigma factor is associated with the core the holoenzyme is formed, which can initiate transcription.

It catalyses the reaction RNA(n) + a ribonucleoside 5'-triphosphate = RNA(n+1) + diphosphate. In terms of biological role, DNA-dependent RNA polymerase catalyzes the transcription of DNA into RNA using the four ribonucleoside triphosphates as substrates. This Tropheryma whipplei (strain Twist) (Whipple's bacillus) protein is DNA-directed RNA polymerase subunit beta.